Reading from the N-terminus, the 201-residue chain is uncharacterized protein (201 aa).

Residues 53-74 (PKKNTAHKNSTTSTVASSGNTT) form a disordered region. Residues 59–74 (HKNSTTSTVASSGNTT) show a composition bias toward polar residues. Residues 88 to 136 (AKRLSHKEVERRRREAISEGIKELANIVPGCEKNKGSILQRTAQYIRSL) form the bHLH domain.

It is found in the nucleus. This is an uncharacterized protein from Schizosaccharomyces pombe (strain 972 / ATCC 24843) (Fission yeast).